The primary structure comprises 130 residues: Protein ApaG (130 aa).

Positions 3 to 127 (SAVTRGIEVT…FSLDVPEQRR (125 aa)) constitute an ApaG domain.

This Brucella abortus (strain S19) protein is Protein ApaG.